A 49-amino-acid chain; its full sequence is Putative DNA-directed RNA polymerase subunit omega (49 aa).

The protein belongs to the RNA polymerase subunit omega family.

The protein localises to the plastid. It localises to the chloroplast. It catalyses the reaction RNA(n) + a ribonucleoside 5'-triphosphate = RNA(n+1) + diphosphate. Functionally, may be involved in RNA polymerase activity. This Cyanidioschyzon merolae (strain NIES-3377 / 10D) (Unicellular red alga) protein is Putative DNA-directed RNA polymerase subunit omega (rpoZ).